A 342-amino-acid chain; its full sequence is Keratin-associated protein 29-1 (342 aa).

Tandem repeats lie at residues 5-9 (CCPEN), 91-95 (CCASD), 239-243 (CCVPP), 309-313 (CCVTG), and 324-328 (CCPPT). A 5 X 5 AA repeats of C-C-X(3) region spans residues 5–328 (CCPENPTAVP…SSGPGCCPPT (324 aa)).

This sequence belongs to the KRTAP type 10 family.

The chain is Keratin-associated protein 29-1 (Krtap29-1) from Mus musculus (Mouse).